The following is a 233-amino-acid chain: uncharacterized protein (233 aa).

This is an uncharacterized protein from Acanthamoeba polyphaga (Amoeba).